The chain runs to 290 residues: Elongation factor Ts (290 aa).

The involved in Mg(2+) ion dislocation from EF-Tu stretch occupies residues 81-84 (TDFV).

This sequence belongs to the EF-Ts family.

It is found in the cytoplasm. In terms of biological role, associates with the EF-Tu.GDP complex and induces the exchange of GDP to GTP. It remains bound to the aminoacyl-tRNA.EF-Tu.GTP complex up to the GTP hydrolysis stage on the ribosome. The chain is Elongation factor Ts from Vesicomyosocius okutanii subsp. Calyptogena okutanii (strain HA).